A 276-amino-acid polypeptide reads, in one-letter code: ATP synthase subunit a (276 aa).

Helical transmembrane passes span 47–67 (WHID…WLFY), 107–127 (IAPL…MDLI), 152–172 (DLNV…FYSI), 188–208 (PFNH…TLIA), 226–246 (LIFI…SVPW), and 247–267 (AIFH…LTIV).

This sequence belongs to the ATPase A chain family. In terms of assembly, F-type ATPases have 2 components, CF(1) - the catalytic core - and CF(0) - the membrane proton channel. CF(1) has five subunits: alpha(3), beta(3), gamma(1), delta(1), epsilon(1). CF(0) has three main subunits: a(1), b(2) and c(9-12). The alpha and beta chains form an alternating ring which encloses part of the gamma chain. CF(1) is attached to CF(0) by a central stalk formed by the gamma and epsilon chains, while a peripheral stalk is formed by the delta and b chains.

The protein localises to the cell inner membrane. Functionally, key component of the proton channel; it plays a direct role in the translocation of protons across the membrane. This chain is ATP synthase subunit a, found in Shewanella halifaxensis (strain HAW-EB4).